An 84-amino-acid polypeptide reads, in one-letter code: Small ribosomal subunit protein bS20 (84 aa).

Belongs to the bacterial ribosomal protein bS20 family.

Binds directly to 16S ribosomal RNA. The protein is Small ribosomal subunit protein bS20 of Limosilactobacillus reuteri (strain DSM 20016) (Lactobacillus reuteri).